Consider the following 236-residue polypeptide: 7-cyano-7-deazaguanine synthase (236 aa).

ATP is bound at residue 7-17 (CSGGLDSVSLA). Zn(2+) is bound by residues cysteine 185, cysteine 193, cysteine 196, and cysteine 199.

This sequence belongs to the QueC family. Zn(2+) is required as a cofactor.

The catalysed reaction is 7-carboxy-7-deazaguanine + NH4(+) + ATP = 7-cyano-7-deazaguanine + ADP + phosphate + H2O + H(+). Its pathway is purine metabolism; 7-cyano-7-deazaguanine biosynthesis. In terms of biological role, catalyzes the ATP-dependent conversion of 7-carboxy-7-deazaguanine (CDG) to 7-cyano-7-deazaguanine (preQ(0)). The polypeptide is 7-cyano-7-deazaguanine synthase (Rhizobium etli (strain CIAT 652)).